The following is a 259-amino-acid chain: 3-deoxy-manno-octulosonate cytidylyltransferase (259 aa).

It belongs to the KdsB family.

The protein resides in the cytoplasm. The enzyme catalyses 3-deoxy-alpha-D-manno-oct-2-ulosonate + CTP = CMP-3-deoxy-beta-D-manno-octulosonate + diphosphate. The protein operates within nucleotide-sugar biosynthesis; CMP-3-deoxy-D-manno-octulosonate biosynthesis; CMP-3-deoxy-D-manno-octulosonate from 3-deoxy-D-manno-octulosonate and CTP: step 1/1. It functions in the pathway bacterial outer membrane biogenesis; lipopolysaccharide biosynthesis. In terms of biological role, activates KDO (a required 8-carbon sugar) for incorporation into bacterial lipopolysaccharide in Gram-negative bacteria. The sequence is that of 3-deoxy-manno-octulosonate cytidylyltransferase from Xanthomonas euvesicatoria pv. vesicatoria (strain 85-10) (Xanthomonas campestris pv. vesicatoria).